We begin with the raw amino-acid sequence, 86 residues long: Large ribosomal subunit protein bL31m (86 aa).

A mitochondrion-targeting transit peptide spans 1 to 18; the sequence is MKCSLRLFEKAGRLSVRS.

Belongs to the bacterial ribosomal protein bL31 family. Highly divergent. As to quaternary structure, component of the mitochondrial large ribosomal subunit (mt-LSU). Mature yeast 74S mitochondrial ribosomes consist of a small (37S) and a large (54S) subunit. The 37S small subunit contains a 15S ribosomal RNA (15S mt-rRNA) and at least 32 different proteins. The 54S large subunit contains a 21S rRNA (21S mt-rRNA) and at least 45 different proteins.

Its subcellular location is the mitochondrion. Its function is as follows. Component of the mitochondrial ribosome (mitoribosome), a dedicated translation machinery responsible for the synthesis of mitochondrial genome-encoded proteins, including at least some of the essential transmembrane subunits of the mitochondrial respiratory chain. The mitoribosomes are attached to the mitochondrial inner membrane and translation products are cotranslationally integrated into the membrane. The chain is Large ribosomal subunit protein bL31m (tam9) from Schizosaccharomyces pombe (strain 972 / ATCC 24843) (Fission yeast).